A 978-amino-acid polypeptide reads, in one-letter code: Mineralocorticoid receptor (978 aa).

Residues 1 to 602 form a modulating region; that stretch reads METKGYHSLP…STGSSRPSKI (602 aa). The segment covering 234–243 has biased composition (polar residues); the sequence is SLTCSPSVEN. Disordered regions lie at residues 234–331 and 353–372; these read SLTC…STVG and GAIQ…AHDV. Ser-250, Ser-259, Ser-283, Ser-287, and Ser-299 each carry phosphoserine. Over residues 259–300 the composition is skewed to low complexity; it reads SPLSSPLSSMKSPISSPPSHCSVKSPVSSPNNVPLRSSVSSP. Residues 301–331 show a composition bias toward polar residues; the sequence is ANLNNSRCSVSSPSNTNNRSTLSSPTASTVG. Positions 603, 606, 620, 623, 637, 643, 653, and 656 each coordinate Zn(2+). NR C4-type zinc fingers lie at residues 603 to 623 and 637 to 661; these read CLVC…CGSC and CAGR…LQKC. A DNA-binding region (nuclear receptor) is located at residues 603–666; that stretch reads CLVCGDEASG…RLQKCLQAGM (64 aa). A hinge region spans residues 667–719; that stretch reads NLGARKSKKLGKLKGLHEEQPQQPPPPPPQSPEEGTTYIAPTKEPSVNSALVP. The tract at residues 681-706 is disordered; that stretch reads GLHEEQPQQPPPPPPQSPEEGTTYIA. Residues 688–697 show a composition bias toward pro residues; it reads QQPPPPPPQS. The 239-residue stretch at 720-958 folds into the NR LBD domain; sequence QLASITRALT…EFPAMLVEII (239 aa). Residues Asn-764 and Gln-770 each coordinate 21-hydroxyprogesterone. Aldosterone-binding residues include Asn-764 and Gln-770. Residues Asn-764 and Gln-770 each contribute to the progesterone site. The segment at 776-779 is important for coactivator binding; the sequence is KWAK. Arg-811 and Thr-939 together coordinate 21-hydroxyprogesterone. Residues Arg-811 and Thr-939 each contribute to the aldosterone site. 2 residues coordinate progesterone: Arg-811 and Thr-939.

The protein belongs to the nuclear hormone receptor family. NR3 subfamily. As to quaternary structure, heteromultimeric cytoplasmic complex with HSP90, HSP70, and FKBP4, in the absence of ligand. After ligand binding, it translocates to the nucleus and binds to DNA as a homodimer and as a heterodimer with NR3C1. Binds the coactivator NCOA2. May interact with HSD11B2 in the absence of ligand. Binds the coactivators NCOA1, TIF1 and NRIP1. Post-translationally, phosphorylated. Expressed in heart and kidney.

Its subcellular location is the cytoplasm. The protein localises to the nucleus. It is found in the endoplasmic reticulum membrane. Its function is as follows. Receptor for both mineralocorticoids (MC) such as aldosterone and glucocorticoids (GC) such as corticosterone or cortisol. Binds to mineralocorticoid response elements (MRE) and transactivates target genes. The effect of MC is to increase ion and water transport and thus raise extracellular fluid volume and blood pressure and lower potassium levels. The protein is Mineralocorticoid receptor (Nr3c2) of Mus musculus (Mouse).